The following is a 258-amino-acid chain: Trans-aconitate 2-methyltransferase (258 aa).

This sequence belongs to the methyltransferase superfamily. Tam family.

It is found in the cytoplasm. It carries out the reaction trans-aconitate + S-adenosyl-L-methionine = (E)-3-(methoxycarbonyl)pent-2-enedioate + S-adenosyl-L-homocysteine. In terms of biological role, catalyzes the S-adenosylmethionine monomethyl esterification of trans-aconitate. In Yersinia pseudotuberculosis serotype O:1b (strain IP 31758), this protein is Trans-aconitate 2-methyltransferase.